The following is a 221-amino-acid chain: Type II secretion system protein J (221 aa).

Residues 1 to 15 (MWRTNQVSSRQNMAG) constitute a propeptide, leader sequence. Phenylalanine 16 carries the post-translational modification N-methylphenylalanine. Residues 16-36 (FTLIEVLVAIAIFASLSVGAY) form a helical membrane-spanning segment.

It belongs to the GSP J family. As to quaternary structure, type II secretion is composed of four main components: the outer membrane complex, the inner membrane complex, the cytoplasmic secretion ATPase and the periplasm-spanning pseudopilus. Interacts with core component epsG. Post-translationally, cleaved by prepilin peptidase. In terms of processing, methylated by prepilin peptidase at the amino group of the N-terminal phenylalanine once the leader sequence is cleaved by prepilin peptidase.

It is found in the cell inner membrane. Functionally, component of the type II secretion system required for the energy-dependent secretion of extracellular factors such as proteases and toxins from the periplasm. Part of the pseudopilus tip complex that is critical for the recognition and binding of secretion substrates. In Vibrio cholerae serotype O1 (strain ATCC 39315 / El Tor Inaba N16961), this protein is Type II secretion system protein J (epsJ).